Here is a 1912-residue protein sequence, read N- to C-terminus: Receptor-type tyrosine-protein phosphatase delta (1912 aa).

Residues 1 to 20 (MVPVARPLSLLLTFFLCACA) form the signal peptide. At 21-1266 (ETPPRFTRTP…PQPITDEEEG (1246 aa)) the chain is on the extracellular side. Ig-like C2-type domains follow at residues 24–114 (PRFT…TRLT) and 126–224 (PTID…ANLY). Cystine bridges form between Cys-45-Cys-98 and Cys-147-Cys-207. A mini-exon peptide A9; sufficient for interaction with IL1RAPL1 region spans residues 181–189 (ESIGGTPIR). Residues 227 to 230 (ELRE) form a mini-exon peptide B; required for interaction with SLITRK2 and in the function in pre-synaptic differentiation; Acts as an adjustable linker to control relative positions and orientations of the PTPRD second and third immunoglobilin domains for their simultaneous interactions with the first immunoglobilin domain of IL1RAPL1 and IL1RAP; Modulates affinity for IL1RAPL1 and IL1RAP region. Residues 236-318 (PRFSIPPTNH…GVIEAIAQIT (83 aa)) form the Ig-like C2-type 3 domain. N-linked (GlcNAc...) asparagine glycosylation is found at Asn-254 and Asn-299. The cysteines at positions 257 and 302 are disulfide-linked. Fibronectin type-III domains are found at residues 325–415 (PPGT…TSEQ), 420–516 (APRD…TGVP), 518–607 (QPLN…TMQS), 612–709 (PPQD…TDED), 714–822 (PPRK…TTGA), 823–916 (VPGK…VPEE), 921–1016 (FPQN…TLPV), and 1020–1106 (FAKN…TAPD). N-linked (GlcNAc...) asparagine glycans are attached at residues Asn-724 and Asn-832. Residues 1267–1287 (LIWVVGPVLAVVFIICIVIAI) form a helical membrane-spanning segment. The Cytoplasmic segment spans residues 1288–1912 (LLYKRKRAES…YLGSFDHYAT (625 aa)). Residues 1298–1319 (ESRKSSLPNSKEVPSHHPTDPV) are disordered. Basic and acidic residues predominate over residues 1310 to 1319 (VPSHHPTDPV). 2 Tyrosine-protein phosphatase domains span residues 1357–1612 (FSQE…LLEA) and 1644–1903 (MELE…ALEY). Residues Asp-1521, 1553-1559 (CSAGVGR), and Gln-1597 contribute to the substrate site. Cys-1553 acts as the Phosphocysteine intermediate in catalysis. Catalysis depends on Cys-1844, which acts as the Phosphocysteine intermediate.

This sequence belongs to the protein-tyrosine phosphatase family. Receptor class 2A subfamily. As to quaternary structure, interacts with PPFIA1, PPFIA2 and PPFIA3. Interacts (via extracellular domain) with SLITRK4 (via LRR 1 and 2 repeats). Interacts with SLITRK2; induces presynaptic differentiation. Interacts (via the second immunoglobilin domain) with IL1RAPL1 (via the first immunoglobilin domain); induces pre- and postsynaptic differentiation of neurons and synapse formation. Isoform G, isoform H, isoform I, isoform J, and isoform K do not interact with IL1RAPL1. Interacts (via the third immunoglobilin domain) with IL1RAP (via the first immunoglobilin domain); induces pre- and postsynaptic differentiation of neurons. In terms of processing, a cleavage occurs, separating the extracellular domain from the transmembrane segment. This process called 'ectodomain shedding' is thought to be involved in receptor desensitization, signal transduction and/or membrane localization. As to expression, brain, kidney, heart, and some B-cell lines.

Its subcellular location is the membrane. It carries out the reaction O-phospho-L-tyrosyl-[protein] + H2O = L-tyrosyl-[protein] + phosphate. Functionally, can bidirectionally induce pre- and post-synaptic differentiation of neurons by mediating interaction with IL1RAP and IL1RAPL1 trans-synaptically. Involved in pre-synaptic differentiation through interaction with SLITRK2. In Mus musculus (Mouse), this protein is Receptor-type tyrosine-protein phosphatase delta (Ptprd).